The primary structure comprises 73 residues: Large ribosomal subunit protein uL29 (73 aa).

The segment at Met-1 to Asp-20 is disordered.

It belongs to the universal ribosomal protein uL29 family.

The sequence is that of Large ribosomal subunit protein uL29 from Protochlamydia amoebophila (strain UWE25).